The primary structure comprises 30 residues: Cycloviolacin-O9 (30 aa).

Residues 1-30 (GIPCGESCVWIPCLTSAVGCSCKSKVCYRN) constitute a cross-link (cyclopeptide (Gly-Asn)). 3 disulfides stabilise this stretch: Cys-4/Cys-20, Cys-8/Cys-22, and Cys-13/Cys-27.

In terms of processing, this is a cyclic peptide.

Functionally, probably participates in a plant defense mechanism. The sequence is that of Cycloviolacin-O9 from Viola odorata (Sweet violet).